A 217-amino-acid chain; its full sequence is 3-demethoxyubiquinol 3-hydroxylase (217 aa).

Fe cation is bound by residues Glu66, Glu96, His99, Glu148, Glu180, and His183.

It belongs to the COQ7 family. The cofactor is Fe cation.

It is found in the cell membrane. It catalyses the reaction a 5-methoxy-2-methyl-3-(all-trans-polyprenyl)benzene-1,4-diol + AH2 + O2 = a 3-demethylubiquinol + A + H2O. It participates in cofactor biosynthesis; ubiquinone biosynthesis. Catalyzes the hydroxylation of 2-nonaprenyl-3-methyl-6-methoxy-1,4-benzoquinol during ubiquinone biosynthesis. In Xylella fastidiosa (strain Temecula1 / ATCC 700964), this protein is 3-demethoxyubiquinol 3-hydroxylase.